The primary structure comprises 327 residues: tRNA dimethylallyltransferase (327 aa).

Residue 14-21 (GPTASGKT) coordinates ATP. 16–21 (TASGKT) contacts substrate. Interaction with substrate tRNA stretches follow at residues 39-42 (DSAL) and 163-167 (QRIQR).

This sequence belongs to the IPP transferase family. As to quaternary structure, monomer. It depends on Mg(2+) as a cofactor.

It catalyses the reaction adenosine(37) in tRNA + dimethylallyl diphosphate = N(6)-dimethylallyladenosine(37) in tRNA + diphosphate. Catalyzes the transfer of a dimethylallyl group onto the adenine at position 37 in tRNAs that read codons beginning with uridine, leading to the formation of N6-(dimethylallyl)adenosine (i(6)A). This Xanthomonas axonopodis pv. citri (strain 306) protein is tRNA dimethylallyltransferase.